We begin with the raw amino-acid sequence, 1020 residues long: Calcium-transporting ATPase 10, plasma membrane-type (1020 aa).

The Cytoplasmic segment spans residues 1 to 175; sequence MESYLEENFG…FVWEALQDTT (175 aa). Positions 21-32 are interaction with calmodulin; it reads ALRRWRKLCGVV. Transmembrane regions (helical) follow at residues 176 to 196 and 199 to 219; these read LIILAVCAFVSLVVGIAMEGW and GAHDGLGIVASILLVVFVTAT. Residues 220 to 263 are Cytoplasmic-facing; that stretch reads SDYRQSLQFKDLDKEKKKIQVQVTRNGFRQRLSIYDLLPGDVVH. 2 consecutive transmembrane segments (helical) span residues 264-284 and 352-372; these read LAIGDQVPADGLFISGFSLLI and GVATIIGKIGLFFAVITFIVL. At 373–400 the chain is on the cytoplasmic side; that stretch reads SQGLISKKYHEGLLLSWSGDDALEMLEH. A helical transmembrane segment spans residues 401–421; sequence FAIAVTIVVVAVPEGLPLAVT. Asp456 serves as the catalytic 4-aspartylphosphate intermediate. Asp758 and Asp762 together coordinate Mg(2+). The chain crosses the membrane as a helical span at residues 843–863; sequence LTAVQLLWVNMIMDTLGALAL. Over 864 to 887 the chain is Cytoplasmic; it reads ATEPPNDDLMKREPVGRTGKFITN. 2 helical membrane-spanning segments follow: residues 888–907 and 924–944; these read VMWRNILGQSFYQFIVMWYL and VVLNTIIFNSFVFCQVFNEIS. The Cytoplasmic segment spans residues 945–961; sequence SREMEKINVLRGILKNY. Transmembrane regions (helical) follow at residues 962-982 and 995-1015; these read VFLGVLTSTVVFQFIMVQFLG and WIASVLLGLIGMPISAIIKLL. Over 1016–1020 the chain is Cytoplasmic; sequence PVGSS.

The protein belongs to the cation transport ATPase (P-type) (TC 3.A.3) family. Type IIB subfamily.

The protein resides in the membrane. It carries out the reaction Ca(2+)(in) + ATP + H2O = Ca(2+)(out) + ADP + phosphate + H(+). Its activity is regulated as follows. Activated by calmodulin. Functionally, this magnesium-dependent enzyme catalyzes the hydrolysis of ATP coupled with the translocation of calcium from the cytosol out of the cell, into the endoplasmic reticulum, or into organelles. This is Calcium-transporting ATPase 10, plasma membrane-type from Oryza sativa subsp. japonica (Rice).